The chain runs to 560 residues: Eukaryotic translation initiation factor 3 subunit D-1 (560 aa).

The tract at residues 98-166 (VQKPPHQRGR…RGPPPKMRES (69 aa)) is disordered. The span at 100-121 (KPPHQRGRFRNMRNSRSGRGRN) shows a compositional bias: basic residues. T128 carries the phosphothreonine modification. Residues 147–156 (GRGMGKKFGH) are compositionally biased toward basic residues. The segment at 291–305 (EFDLLTVNESSVEPP) is RNA gate.

Belongs to the eIF-3 subunit D family. As to quaternary structure, component of the eukaryotic translation initiation factor 3 (eIF-3) complex. The eIF-3 complex interacts with pix.

The protein localises to the cytoplasm. Functionally, mRNA cap-binding component of the eukaryotic translation initiation factor 3 (eIF-3) complex, which is involved in protein synthesis of a specialized repertoire of mRNAs and, together with other initiation factors, stimulates binding of mRNA and methionyl-tRNAi to the 40S ribosome. The eIF-3 complex specifically targets and initiates translation of a subset of mRNAs involved in cell proliferation. In the eIF-3 complex, eif3d specifically recognizes and binds the 7-methylguanosine cap of a subset of mRNAs. This is Eukaryotic translation initiation factor 3 subunit D-1 from Drosophila melanogaster (Fruit fly).